The following is a 465-amino-acid chain: Poly(A) polymerase I (465 aa).

Catalysis depends on residues Asp80, Asp82, and Asp162. A disordered region spans residues 429–465 (SAPPDQKGMLNELDEEPSPRRRTRRPRKRAPRREGTA). The segment covering 448–459 (RRRTRRPRKRAP) has biased composition (basic residues).

The protein belongs to the tRNA nucleotidyltransferase/poly(A) polymerase family.

It carries out the reaction RNA(n) + ATP = RNA(n)-3'-adenine ribonucleotide + diphosphate. Adds poly(A) tail to the 3' end of many RNAs, which usually targets these RNAs for decay. Plays a significant role in the global control of gene expression, through influencing the rate of transcript degradation, and in the general RNA quality control. This is Poly(A) polymerase I from Escherichia coli O157:H7.